A 269-amino-acid chain; its full sequence is Autophagy protein 5 (269 aa).

Lys-132 is covalently cross-linked (Glycyl lysine isopeptide (Lys-Gly) (interchain with G-Cter in ATG12)).

It belongs to the ATG5 family. Post-translationally, conjugated to Atg12, which is essential for autophagy.

The protein localises to the cytoplasm. Its subcellular location is the preautophagosomal structure membrane. Involved in autophagic vesicle formation. Conjugation with Atg12, through a ubiquitin-like conjugating system involving Atg7 as an E1-like activating enzyme and Atg10 as an E2-like conjugating enzyme, is essential for its function. The Atg12-Atg5 conjugate acts as an E3-like enzyme which is required for lipidation of Atg8 and its association to the vesicle membranes. In Drosophila melanogaster (Fruit fly), this protein is Autophagy protein 5 (Atg5).